The sequence spans 299 residues: Putative activator of 90 kDa heat shock protein ATPase homolog 2 (299 aa).

This sequence belongs to the AHA1 family.

Functionally, co-chaperone that stimulates HSP90 ATPase activity. The chain is Putative activator of 90 kDa heat shock protein ATPase homolog 2 from Homo sapiens (Human).